Here is a 255-residue protein sequence, read N- to C-terminus: Ribosomal RNA small subunit methyltransferase A (255 aa).

S-adenosyl-L-methionine is bound by residues Asn13, Leu15, Gly40, Glu61, Asp85, and Asn103.

The protein belongs to the class I-like SAM-binding methyltransferase superfamily. rRNA adenine N(6)-methyltransferase family. RsmA subfamily.

The protein localises to the cytoplasm. It catalyses the reaction adenosine(1518)/adenosine(1519) in 16S rRNA + 4 S-adenosyl-L-methionine = N(6)-dimethyladenosine(1518)/N(6)-dimethyladenosine(1519) in 16S rRNA + 4 S-adenosyl-L-homocysteine + 4 H(+). Functionally, specifically dimethylates two adjacent adenosines (A1518 and A1519) in the loop of a conserved hairpin near the 3'-end of 16S rRNA in the 30S particle. May play a critical role in biogenesis of 30S subunits. The protein is Ribosomal RNA small subunit methyltransferase A of Dechloromonas aromatica (strain RCB).